Here is a 465-residue protein sequence, read N- to C-terminus: MFIDGKWILREDIDVFDPYTLENIEKITALDREETKSAIEVAEKNKEIMKNLSPSKRYSILMKIAEQISLKKDLFAKTISIDVGKPIKQSKIEVDRTLTALKLSAFYAKELRGETINSENGLIFTKKEPLGVVGAITPFNFPLNLITHKIGPAIATGNSVVLHPSSKAPIVAIYLTKIIEHVLKQMDVPRGIFNLATGNGDIVGDEISKNDNINMVSFTGSVEVGESISKNAKMKKVALELGGNNPMIVLKDSDIKLAAKSAVKSKFLNAGQVCISVGQVLVEEEVLETFTKHVIEETKKLILGNPLDTKTDIGPLISPESALRIENLIKKSVNEGGEVLIGGNRQNSLISPAVINIDENNILSKIETFGPVLPILKVKDSEEAVSIANNSKYGLQAGVFTNDINKAMKIADSLEYGGIMINSSPTFRKDNMPFGGVKKSGLGREGIKYTVEEMCETKTIVIHNI.

NAD(+) is bound at residue 220-225; it reads GSVEVG. Active-site residues include glutamate 240 and cysteine 274.

Belongs to the aldehyde dehydrogenase family. Homotetramer.

The enzyme catalyses (S)-lactaldehyde + NAD(+) + H2O = (S)-lactate + NADH + 2 H(+). It participates in cofactor biosynthesis; coenzyme F420 biosynthesis. Its function is as follows. Involved in F420 biosynthesis through the oxidation of lactaldehyde to lactate. The sequence is that of Lactaldehyde dehydrogenase from Methanococcus maripaludis (strain C5 / ATCC BAA-1333).